The primary structure comprises 78 residues: MASLIQVRDLLALRGRMEAAQISQALNTPQPMINAMLQQLESMGKAVRIQEEPDGCLSGSCKSCPEGKACLREWWALR.

The iron-sulfur cluster site is built by Cys-56, Cys-61, Cys-64, and Cys-70.

Belongs to the FeoC family.

Its function is as follows. May function as a transcriptional regulator that controls feoABC expression. This chain is Probable [Fe-S]-dependent transcriptional repressor, found in Escherichia coli O17:K52:H18 (strain UMN026 / ExPEC).